We begin with the raw amino-acid sequence, 211 residues long: Protein-methionine-sulfoxide reductase heme-binding subunit MsrQ (211 aa).

Helical transmembrane passes span 45–65 (HFTGLTALKFLLAALLITPLA), 82–102 (LWCFAWATLHLTSYALLELGV), 116–136 (PYLTLGIISWVILLALAFTST), 153–173 (FVYLVAILAPIHYLWSVKIIS), and 178–198 (IYAGLAVLLLALRYKKLLSLF).

Belongs to the MsrQ family. Heterodimer of a catalytic subunit (MsrP) and a heme-binding subunit (MsrQ). FMN is required as a cofactor. The cofactor is heme b.

Its subcellular location is the cell inner membrane. Its function is as follows. Part of the MsrPQ system that repairs oxidized periplasmic proteins containing methionine sulfoxide residues (Met-O), using respiratory chain electrons. Thus protects these proteins from oxidative-stress damage caused by reactive species of oxygen and chlorine generated by the host defense mechanisms. MsrPQ is essential for the maintenance of envelope integrity under bleach stress, rescuing a wide series of structurally unrelated periplasmic proteins from methionine oxidation, including the primary periplasmic chaperone SurA and the lipoprotein Pal. MsrQ provides electrons for reduction to the reductase catalytic subunit MsrP, using the quinone pool of the respiratory chain. In Escherichia coli O127:H6 (strain E2348/69 / EPEC), this protein is Protein-methionine-sulfoxide reductase heme-binding subunit MsrQ.